A 467-amino-acid chain; its full sequence is 3-isopropylmalate dehydratase large subunit (467 aa).

[4Fe-4S] cluster is bound by residues cysteine 347, cysteine 407, and cysteine 410.

Belongs to the aconitase/IPM isomerase family. LeuC type 1 subfamily. In terms of assembly, heterodimer of LeuC and LeuD. Requires [4Fe-4S] cluster as cofactor.

The enzyme catalyses (2R,3S)-3-isopropylmalate = (2S)-2-isopropylmalate. The protein operates within amino-acid biosynthesis; L-leucine biosynthesis; L-leucine from 3-methyl-2-oxobutanoate: step 2/4. Its function is as follows. Catalyzes the isomerization between 2-isopropylmalate and 3-isopropylmalate, via the formation of 2-isopropylmaleate. The sequence is that of 3-isopropylmalate dehydratase large subunit from Picosynechococcus sp. (strain ATCC 27264 / PCC 7002 / PR-6) (Agmenellum quadruplicatum).